The primary structure comprises 168 residues: MQSTCVYRECMRNHAAKLGSYAIDGCREYSQPSTGDLCVACGCHRSYHRRIDVISSPQINHTRFPFTSLRRVKQLARLKWKTAEERNEEEEDDTEETSTEEKMTVQRRRKSKFTAEQREAMKDYAAKLGWTLKDKRALREEIRVFCEGIGVTRYHFKTWVNNNKKFYH.

The segment at Tyr-7–Ile-51 adopts a ZF-HD dimerization-type; degenerate zinc-finger fold. Residues Ala-76–Met-103 are a coiled coil. A disordered region spans residues Thr-82–Lys-112. Positions Arg-86 to Ser-98 are enriched in acidic residues. A DNA-binding region (homeobox) is located at residues Gln-106–His-168.

As to quaternary structure, homo- and heterodimer with other ZFHD proteins. Interacts with ZHD11. As to expression, mostly expressed in flowers and stems.

It localises to the nucleus. Functionally, putative transcription factor. The protein is Zinc-finger homeodomain protein 14 (ZHD14) of Arabidopsis thaliana (Mouse-ear cress).